We begin with the raw amino-acid sequence, 217 residues long: MSFLLHQSRFFTTVNHLQDLPATSQPEICFAGRSNAGKSTAINILCNQKRLAFASKTPGRTQHINYFSVGNADEPTAHLVDLPGYGYAEVPGAAKAHWEALLSAYLQSRSQLRGMILMMDSRRPLTDLDRRMIEWFVPTGKPIHTLLTKCDKLTRQESVNALRATQKGLAEYRAAGYRGELTAQLFSALKRIGIDEAHALIESWLIPEAKGETDTPQ.

The EngB-type G domain maps to 24–207 (SQPEICFAGR…HALIESWLIP (184 aa)). GTP-binding positions include 32–39 (GRSNAGKS), 59–63 (GRTQH), 81–84 (DLPG), 148–151 (TKCD), and 185–188 (LFSA). Residues Ser39 and Thr61 each contribute to the Mg(2+) site.

This sequence belongs to the TRAFAC class TrmE-Era-EngA-EngB-Septin-like GTPase superfamily. EngB GTPase family. Requires Mg(2+) as cofactor.

In terms of biological role, necessary for normal cell division and for the maintenance of normal septation. In Paraburkholderia xenovorans (strain LB400), this protein is Probable GTP-binding protein EngB.